The sequence spans 402 residues: NADH-quinone oxidoreductase subunit D (402 aa).

The protein belongs to the complex I 49 kDa subunit family. In terms of assembly, NDH-1 is composed of 14 different subunits. Subunits NuoB, C, D, E, F, and G constitute the peripheral sector of the complex.

The protein resides in the cell inner membrane. It catalyses the reaction a quinone + NADH + 5 H(+)(in) = a quinol + NAD(+) + 4 H(+)(out). Functionally, NDH-1 shuttles electrons from NADH, via FMN and iron-sulfur (Fe-S) centers, to quinones in the respiratory chain. The immediate electron acceptor for the enzyme in this species is believed to be ubiquinone. Couples the redox reaction to proton translocation (for every two electrons transferred, four hydrogen ions are translocated across the cytoplasmic membrane), and thus conserves the redox energy in a proton gradient. The chain is NADH-quinone oxidoreductase subunit D from Xanthobacter autotrophicus (strain ATCC BAA-1158 / Py2).